Reading from the N-terminus, the 176-residue chain is NAD(P)H-quinone oxidoreductase subunit 6, chloroplastic (176 aa).

Helical transmembrane passes span 10–30, 32–52, 61–81, 92–112, and 152–172; these read FLLV…VLLT, PIYS…FYIL, AQLL…VMFM, LWTI…VSLI, and FFLP…GAIA.

This sequence belongs to the complex I subunit 6 family. As to quaternary structure, NDH is composed of at least 16 different subunits, 5 of which are encoded in the nucleus.

The protein resides in the plastid. It localises to the chloroplast thylakoid membrane. It catalyses the reaction a plastoquinone + NADH + (n+1) H(+)(in) = a plastoquinol + NAD(+) + n H(+)(out). It carries out the reaction a plastoquinone + NADPH + (n+1) H(+)(in) = a plastoquinol + NADP(+) + n H(+)(out). NDH shuttles electrons from NAD(P)H:plastoquinone, via FMN and iron-sulfur (Fe-S) centers, to quinones in the photosynthetic chain and possibly in a chloroplast respiratory chain. The immediate electron acceptor for the enzyme in this species is believed to be plastoquinone. Couples the redox reaction to proton translocation, and thus conserves the redox energy in a proton gradient. The protein is NAD(P)H-quinone oxidoreductase subunit 6, chloroplastic (ndhG) of Gossypium hirsutum (Upland cotton).